Here is a 277-residue protein sequence, read N- to C-terminus: Large ribosomal subunit protein uL2 (277 aa).

Disordered regions lie at residues 32 to 58 (KSLT…RGGG) and 225 to 277 (VAMN…RRNK). Basic residues predominate over residues 258-277 (YKTRKKKRYSDKFIIKRRNK).

The protein belongs to the universal ribosomal protein uL2 family. Part of the 50S ribosomal subunit. Forms a bridge to the 30S subunit in the 70S ribosome.

Functionally, one of the primary rRNA binding proteins. Required for association of the 30S and 50S subunits to form the 70S ribosome, for tRNA binding and peptide bond formation. It has been suggested to have peptidyltransferase activity; this is somewhat controversial. Makes several contacts with the 16S rRNA in the 70S ribosome. The polypeptide is Large ribosomal subunit protein uL2 (Borreliella afzelii (strain PKo) (Borrelia afzelii)).